A 40-amino-acid polypeptide reads, in one-letter code: Esterase-4 (40 aa).

Belongs to the type-B carboxylesterase/lipase family.

The catalysed reaction is a carboxylic ester + H2O = an alcohol + a carboxylate + H(+). The sequence is that of Esterase-4 (Est-4) from Drosophila mojavensis (Fruit fly).